The primary structure comprises 396 residues: Tryptophan synthase beta chain (396 aa).

Lys-88 bears the N6-(pyridoxal phosphate)lysine mark.

The protein belongs to the TrpB family. In terms of assembly, tetramer of two alpha and two beta chains. Pyridoxal 5'-phosphate serves as cofactor.

The enzyme catalyses (1S,2R)-1-C-(indol-3-yl)glycerol 3-phosphate + L-serine = D-glyceraldehyde 3-phosphate + L-tryptophan + H2O. Its pathway is amino-acid biosynthesis; L-tryptophan biosynthesis; L-tryptophan from chorismate: step 5/5. In terms of biological role, the beta subunit is responsible for the synthesis of L-tryptophan from indole and L-serine. The protein is Tryptophan synthase beta chain of Shewanella baltica (strain OS155 / ATCC BAA-1091).